The following is a 257-amino-acid chain: MLAKRIVPCLDVKEGKVVKGVQFRNHEIVGDIVPLAARYAEEGADELVFYDITASAHDRVIDKSWVSRVAERIDIPFCVAGGIKTIAQAREKLAFGADKISINSPALTDPSLIERLQDEFGRQCIVIGIDSYFDAQSNSYKVKQFTGDEAATKDTQWFTQDWVQEVQKRGCGEIVLNVMNQDGVRQGYDLKQLSIVREICDVPLIASGGAGTMAHFKDVFEIARVDAALAASVFHKGIIDIGELKNYLFENSIAIRR.

Residues D11 and D130 contribute to the active site.

Belongs to the HisA/HisF family. Heterodimer of HisH and HisF.

The protein localises to the cytoplasm. The catalysed reaction is 5-[(5-phospho-1-deoxy-D-ribulos-1-ylimino)methylamino]-1-(5-phospho-beta-D-ribosyl)imidazole-4-carboxamide + L-glutamine = D-erythro-1-(imidazol-4-yl)glycerol 3-phosphate + 5-amino-1-(5-phospho-beta-D-ribosyl)imidazole-4-carboxamide + L-glutamate + H(+). Its pathway is amino-acid biosynthesis; L-histidine biosynthesis; L-histidine from 5-phospho-alpha-D-ribose 1-diphosphate: step 5/9. Functionally, IGPS catalyzes the conversion of PRFAR and glutamine to IGP, AICAR and glutamate. The HisF subunit catalyzes the cyclization activity that produces IGP and AICAR from PRFAR using the ammonia provided by the HisH subunit. This is Imidazole glycerol phosphate synthase subunit HisF from Shewanella sediminis (strain HAW-EB3).